A 201-amino-acid polypeptide reads, in one-letter code: Protease (201 aa).

Residues His-55, Asp-72, and Cys-122 contribute to the active site.

Belongs to the peptidase C5 family. In terms of assembly, interacts with protease cofactor pVI-C; this interaction is necessary for protease activation.

It localises to the virion. The protein resides in the host nucleus. The enzyme catalyses Cleaves proteins of the adenovirus and its host cell at two consensus sites: -Yaa-Xaa-Gly-Gly-|-Xaa- and -Yaa-Xaa-Gly-Xaa-|-Gly- (in which Yaa is Met, Ile or Leu, and Xaa is any amino acid).. Its activity is regulated as follows. Requires DNA and protease cofactor for maximal activation. Inside nascent virions, becomes partially activated by binding to the viral DNA, allowing it to cleave the cofactor that binds to the protease and fully activates it. Actin, like the viral protease cofactor, seems to act as a cofactor in the cleavage of cytokeratin 18 and of actin itself. In terms of biological role, cleaves viral precursor proteins (pTP, pIIIa, pVI, pVII, pVIII, and pX) inside newly assembled particles giving rise to mature virions. Protease complexed to its cofactor slides along the viral DNA to specifically locate and cleave the viral precursors. Mature virions have a weakened organization compared to the unmature virions, thereby facilitating subsequent uncoating. Without maturation, the particle lacks infectivity and is unable to uncoat. Late in adenovirus infection, in the cytoplasm, may participate in the cytoskeleton destruction. Cleaves host cell cytoskeletal keratins K7 and K18. The chain is Protease from Ovis aries (Sheep).